Consider the following 110-residue polypeptide: Nucleoid-associated protein Sfum_2790 (110 aa).

This sequence belongs to the YbaB/EbfC family. In terms of assembly, homodimer.

It localises to the cytoplasm. The protein resides in the nucleoid. In terms of biological role, binds to DNA and alters its conformation. May be involved in regulation of gene expression, nucleoid organization and DNA protection. In Syntrophobacter fumaroxidans (strain DSM 10017 / MPOB), this protein is Nucleoid-associated protein Sfum_2790.